The sequence spans 579 residues: Suppressor of cytokine signaling 7 (579 aa).

Disordered stretches follow at residues 1–25 (MVFR…GPSE), 89–270 (PPPP…RTQS), and 295–315 (QRGL…RSLS). 3 stretches are compositionally biased toward pro residues: residues 89-99 (PPPPQPPPPAA), 155-165 (PPGPELPPVPF), and 185-196 (QPPPPPPPPGPL). Residues 124-492 (AESLETNSCS…GKFLYFLRSR (369 aa)) form a mediates interaction with SORBS3 region. A compositionally biased stretch (basic residues) spans 206–217 (GSFKIRLSRLFR). Over residues 301–311 (PHPPTPPPPPR) the composition is skewed to pro residues. The SH2 domain occupies 398 to 507 (WYWGPMNWED…PTPVQLLYPV (110 aa)). Positions 502-552 (QLLYPVSRFSNVKSLQHLCRFRIRQLVRIDHIPDLPLPKPLISYIRKFYYY) constitute an SOCS box domain.

As to quaternary structure, substrate-recognition component of the ECS(SOCS7) complex, composed of SOCS7, CUL5, ELOB, ELOC and RNF7/RBX2. Interacts, via the third proline-rich region, with the second SH3 domain of the adapter protein NCK1. Also interacts with GRB2, INSR, PLCG1, SORBS3/vinexin, and phosphorylated STAT3 and STAT5. Interacts with SEPT6. Interacts with phosphorylated IRS4 and PIK3R1. In terms of tissue distribution, widely expressed with higher expression in brain and testis where it is expressed by spermatocytes and early spermatids. Also significantly expressed in spleen, skeletal muscle and kidney.

It is found in the cytoplasm. The protein localises to the nucleus. It localises to the cell membrane. It participates in protein modification; protein ubiquitination. In terms of biological role, substrate-recognition component of a cullin-5-RING E3 ubiquitin-protein ligase complex (ECS complex, also named CRL5 complex), which mediates the ubiquitination and subsequent proteasomal degradation of target proteins, such as DAB1 and IRS1. Specifically recognizes and binds phosphorylated proteins via its SH2 domain, promoting their ubiquitination. The ECS(SOCS7) complex acts as a key regulator of reelin signaling by mediating ubiquitination and degradation of phosphorylated DAB1 in the cortical plate of the developing cerebral cortex, thereby regulating neuron positioning during cortex development. Functions in insulin signaling and glucose homeostasis through IRS1 ubiquitination and subsequent proteasomal degradation. Also inhibits prolactin, growth hormone and leptin signaling by preventing STAT3 and STAT5 activation, sequestering them in the cytoplasm and reducing their binding to DNA. This Mus musculus (Mouse) protein is Suppressor of cytokine signaling 7.